The chain runs to 224 residues: UPF0758 protein PBPRA0202 (224 aa).

An MPN domain is found at 102 to 224 (VLTSPQHTRH…IVSFSEQGWL (123 aa)). Positions 173, 175, and 186 each coordinate Zn(2+). Residues 173 to 186 (HNHPSGVAEPSQSD) carry the JAMM motif motif.

The protein belongs to the UPF0758 family.

This Photobacterium profundum (strain SS9) protein is UPF0758 protein PBPRA0202.